We begin with the raw amino-acid sequence, 273 residues long: Formamidopyrimidine-DNA glycosylase (273 aa).

Pro-2 serves as the catalytic Schiff-base intermediate with DNA. Glu-3 (proton donor) is an active-site residue. Lys-59 serves as the catalytic Proton donor; for beta-elimination activity. 2 residues coordinate DNA: His-92 and Arg-111. Residues 239 to 273 (KVYGKTDEPCVVCGTPIEKIKLNGRGTHFCPNCQK) form an FPG-type zinc finger. Arg-263 functions as the Proton donor; for delta-elimination activity in the catalytic mechanism.

The protein belongs to the FPG family. Monomer. The cofactor is Zn(2+).

The catalysed reaction is Hydrolysis of DNA containing ring-opened 7-methylguanine residues, releasing 2,6-diamino-4-hydroxy-5-(N-methyl)formamidopyrimidine.. It carries out the reaction 2'-deoxyribonucleotide-(2'-deoxyribose 5'-phosphate)-2'-deoxyribonucleotide-DNA = a 3'-end 2'-deoxyribonucleotide-(2,3-dehydro-2,3-deoxyribose 5'-phosphate)-DNA + a 5'-end 5'-phospho-2'-deoxyribonucleoside-DNA + H(+). Involved in base excision repair of DNA damaged by oxidation or by mutagenic agents. Acts as a DNA glycosylase that recognizes and removes damaged bases. Has a preference for oxidized purines, such as 7,8-dihydro-8-oxoguanine (8-oxoG). Has AP (apurinic/apyrimidinic) lyase activity and introduces nicks in the DNA strand. Cleaves the DNA backbone by beta-delta elimination to generate a single-strand break at the site of the removed base with both 3'- and 5'-phosphates. The sequence is that of Formamidopyrimidine-DNA glycosylase from Listeria monocytogenes serovar 1/2a (strain ATCC BAA-679 / EGD-e).